A 550-amino-acid chain; its full sequence is Glucose-6-phosphate isomerase 3 (550 aa).

The active-site Proton donor is the Glu357. Active-site residues include His388 and Lys514.

The protein belongs to the GPI family.

It localises to the cytoplasm. It carries out the reaction alpha-D-glucose 6-phosphate = beta-D-fructose 6-phosphate. The protein operates within carbohydrate biosynthesis; gluconeogenesis. Its pathway is carbohydrate degradation; glycolysis; D-glyceraldehyde 3-phosphate and glycerone phosphate from D-glucose: step 2/4. Catalyzes the reversible isomerization of glucose-6-phosphate to fructose-6-phosphate. In Rhodococcus jostii (strain RHA1), this protein is Glucose-6-phosphate isomerase 3.